Here is a 323-residue protein sequence, read N- to C-terminus: Putative CDC123-like protein L884 (323 aa).

Belongs to the CDC123 family.

This Acanthamoeba polyphaga mimivirus (APMV) protein is Putative CDC123-like protein L884.